A 483-amino-acid chain; its full sequence is Isocitrate dehydrogenase [NADP] (483 aa).

Thr74 is a binding site for NADP(+). Residues Ser83, Asn85, Arg89, Arg99, and Arg121 each contribute to the D-threo-isocitrate site. Residue Asp232 participates in Mg(2+) binding. NADP(+) is bound by residues 264-270 (HGSAPDI) and Asn277.

Belongs to the isocitrate and isopropylmalate dehydrogenases family. Homodimer. Requires Mg(2+) as cofactor. It depends on Mn(2+) as a cofactor.

The enzyme catalyses D-threo-isocitrate + NADP(+) = 2-oxoglutarate + CO2 + NADPH. Its function is as follows. Catalyzes the oxidative decarboxylation of isocitrate to 2-oxoglutarate and carbon dioxide with the concomitant reduction of NADP(+). The sequence is that of Isocitrate dehydrogenase [NADP] (icd) from Rickettsia felis (strain ATCC VR-1525 / URRWXCal2) (Rickettsia azadi).